A 133-amino-acid polypeptide reads, in one-letter code: MDVFMKGLSMAKEGVVAAAEKTKQGVTEAAEKTKEGVLYVGSKTSGVVQGVASVAEKTKEQASHLGGAVFSGAGNIAAATGLVKKEEFPTDLKPEEVAQEAAEEPLIEPLMEPEGESYEDSPQEEYQEYEPEA.

2 repeat units span residues 20-30 and 31-41. Positions 20 to 66 are 4 X 11 AA tandem repeats of [EGS]-K-T-K-[EQ]-[GQ]-V-X(4); it reads EKTKQGVTEAAEKTKEGVLYVGSKTSGVVQGVASVAEKTKEQASHLG. Residues 42 to 55 form a 3; approximate repeat; it reads SKTSGVVQGVASVA. Ser-45 bears the Phosphoserine mark. Repeat unit 4 spans residues 56-66; sequence EKTKEQASHLG. A disordered region spans residues 96 to 133; that stretch reads EVAQEAAEEPLIEPLMEPEGESYEDSPQEEYQEYEPEA. Acidic residues predominate over residues 97–133; sequence VAQEAAEEPLIEPLMEPEGESYEDSPQEEYQEYEPEA. A Phosphoserine; by BARK1, CK2 and GRK5 modification is found at Ser-117.

Belongs to the synuclein family. In terms of processing, phosphorylated. Phosphorylation by G-protein coupled receptor kinases (GRK) is more efficient than phosphorylation by CK1, CK2 and CaM-kinase II. In terms of tissue distribution, highly expressed in the brain.

It is found in the cytoplasm. Its function is as follows. May be involved in neuronal plasticity. The protein is Beta-synuclein (Sncb) of Mus musculus (Mouse).